The following is a 61-amino-acid chain: Metallothionein-2 (61 aa).

Met1 is subject to N-acetylmethionine. Residues 1–29 (MDPNCSCAAGGSCTCAGSCKCKECRCTSC) form a beta region. The a divalent metal cation site is built by Cys5, Cys7, Cys13, Cys15, Cys19, Cys21, Cys24, Cys26, Cys29, Cys33, Cys34, Cys36, Cys37, Cys41, Cys44, Cys48, Cys50, and Cys57. Residues 30–61 (KKSCCSCCPVGCAKCAQGCICKGASDKCSCCA) form an alpha region. Ser58 is modified (phosphoserine). A divalent metal cation-binding residues include Cys59 and Cys60.

Belongs to the metallothionein superfamily. Type 1 family. As to quaternary structure, interacts with EOLA1.

Functionally, metallothioneins have a high content of cysteine residues that bind various heavy metals; these proteins are transcriptionally regulated by both heavy metals and glucocorticoids. This is Metallothionein-2 (MT2A) from Canis lupus familiaris (Dog).